The chain runs to 147 residues: Hemoglobin subunit beta (147 aa).

Residue Val-2 is modified to N-acetylvaline. Positions 3–147 (HLSGEEKSAV…VANALAHKYH (145 aa)) constitute a Globin domain. Thr-13 is modified (phosphothreonine). Residue Ser-45 is modified to Phosphoserine. Lys-60 carries the N6-acetyllysine modification. His-64 provides a ligand contact to heme b. Lys-83 carries the post-translational modification N6-acetyllysine. His-93 provides a ligand contact to heme b. Cys-94 carries the S-nitrosocysteine modification. An N6-acetyllysine modification is found at Lys-145.

This sequence belongs to the globin family. Heterotetramer of two alpha chains and two beta chains. In terms of tissue distribution, red blood cells.

Functionally, involved in oxygen transport from the lung to the various peripheral tissues. This chain is Hemoglobin subunit beta (HBB), found in Lepus europaeus (European hare).